The following is a 1157-amino-acid chain: Nitric oxide synthase, inducible (1157 aa).

The short motif at 23-27 is the DINNN-motif; mediates interaction with SPSB1, SPSB2 and SPSB4 element; it reads DINNN. The interval 29 to 64 is disordered; sequence EKLRQASSSPVTQDDPKCPSRSRHRNECSQPLAETA. C110 and C115 together coordinate Zn(2+). C200 is a binding site for heme b. Q263, W372, Y373, and E377 together coordinate L-arginine. (6R)-L-erythro-5,6,7,8-tetrahydrobiopterin is bound by residues R381, I462, W463, and F476. Y491 contributes to the heme b binding site. The segment at 515–535 is calmodulin-binding; sequence FKVLVKAVLFAAVLMHKTMAA. The 139-residue stretch at 539-677 folds into the Flavodoxin-like domain; that stretch reads ATILFATETG…AFRGWAVQTF (139 aa). Residues T545, E546, T547, R549, S550, S591, T592, S628, C635, E661, and Q665 each coordinate FMN. An FAD-binding FR-type domain is found at 730–970; it reads KYVFSMRLKS…VRSASGFQLP (241 aa). R750 is a binding site for NADP(+). The FAD site is built by H772, R906, Y908, S909, T924, and A926. T929 provides a ligand contact to NADP(+). 4 residues coordinate FAD: Y930, V943, C944, and S945. Positions 984, 1017, 1046, 1047, 1053, 1055, 1057, and 1090 each coordinate NADP(+). The segment at 1138–1157 is disordered; that stretch reads KEGAVGPPSDPRAPGAHGKS.

This sequence belongs to the NOS family. As to quaternary structure, homodimer. Interacts with NHERF1. Interacts with GAPDH; induced by oxidatively-modified low-densitity lipoprotein (LDL(ox)). Interacts with S100A8 and S100A9 to form the iNOS-S100A8/9 transnitrosylase complex. Interacts with SPSB1, SPSB2 and SPSB4. Interacts with ELOC and CUL5 in the presence of SPSB1 or SPSB2 or SPSB4. Forms a complex with ASL, ASS1 and HSP90AA1; the complex regulates cell-autonomous L-arginine synthesis and citrulline recycling while channeling extracellular L-arginine to nitric oxide synthesis pathway. Heme b is required as a cofactor. FAD serves as cofactor. It depends on FMN as a cofactor. The cofactor is (6R)-L-erythro-5,6,7,8-tetrahydrobiopterin. In terms of processing, polyubiquitinated; mediated by SPSB1, SPSB2 and SPSB4, leading to proteasomal degradation. In terms of tissue distribution, detected in both stimulated and unstimulated immune cells and macrophages with little or no up-regulation following cellular stimulation with lipopolysaccharides (LPS) or concanavalin A (ConA).

Its subcellular location is the cytoplasm. It is found in the cytosol. It carries out the reaction 2 L-arginine + 3 NADPH + 4 O2 + H(+) = 2 L-citrulline + 2 nitric oxide + 3 NADP(+) + 4 H2O. Its activity is regulated as follows. Not stimulated by calcium/calmodulin. Its function is as follows. Produces nitric oxide (NO) which is a messenger molecule with diverse functions throughout the body. In macrophages, NO mediates tumoricidal and bactericidal actions. Also has nitrosylase activity and mediates cysteine S-nitrosylation of cytoplasmic target proteins such PTGS2/COX2. As component of the iNOS-S100A8/9 transnitrosylase complex involved in the selective inflammatory stimulus-dependent S-nitrosylation of GAPDH implicated in regulation of the GAIT complex activity and probably multiple targets including ANXA5, EZR, MSN and VIM. Involved in inflammation, enhances the synthesis of pro-inflammatory mediators such as IL6 and IL8. This is Nitric oxide synthase, inducible (NOS2) from Sus scrofa (Pig).